Here is a 155-residue protein sequence, read N- to C-terminus: HTH-type transcriptional repressor MdtR (155 aa).

Positions 4–140 constitute an HTH marR-type domain; that stretch reads ADQLMSDIQL…AAHITAKLAQ (137 aa). Positions 54–77 form a DNA-binding region, H-T-H motif; sequence VSEIAERMEVKPSAVTLMADRLEQ.

As to quaternary structure, homodimer.

The protein resides in the cytoplasm. Its activity is regulated as follows. The binding of MdtR to the mdtRP promoter region is severely inhibited by adding excess concentrations of fusidic acid or novobiocin but not by actinomycin or streptomycin. Functionally, repressor of the multidrug resistance operon mdtRP. Acts by binding directly to the mdtRP promoter region, leading to the repression of its expression. This Bacillus subtilis (strain 168) protein is HTH-type transcriptional repressor MdtR.